The chain runs to 445 residues: Anthranilate N-benzoyltransferase protein 1 (445 aa).

Catalysis depends on proton acceptor residues His-164 and Asp-392.

The protein belongs to the plant acyltransferase family. In terms of processing, N-terminus is blocked.

It catalyses the reaction anthranilate + benzoyl-CoA = N-benzoylanthranilate + CoA. The protein operates within phytoalexin biosynthesis; methoxydianthramide B biosynthesis. Catalyzes the formation of N-benzoylanthranilate, in the course of methoxydianthramide B, a phytoalexin. Phytoalexins are produced in response to infection by parasites, and are essential for the expression of disease resistance. This is Anthranilate N-benzoyltransferase protein 1 (HCBT1) from Dianthus caryophyllus (Carnation).